The sequence spans 292 residues: Ribose import binding protein RbsB (292 aa).

The first 23 residues, 1–23 (MKKLTALTSAVLLGLAVSSSASA), serve as a signal peptide directing secretion.

This sequence belongs to the bacterial solute-binding protein 2 family. As to quaternary structure, the complex is composed of an ATP-binding protein (RbsA), two transmembrane proteins (RbsC) and a solute-binding protein (RbsB).

The protein resides in the periplasm. Functionally, part of the ABC transporter complex RbsABC involved in ribose import. Binds ribose. The sequence is that of Ribose import binding protein RbsB (rbsB) from Haemophilus influenzae (strain ATCC 51907 / DSM 11121 / KW20 / Rd).